Here is a 5005-residue protein sequence, read N- to C-terminus: Bridge-like lipid transfer protein family member 1 (5005 aa).

A helical transmembrane segment spans residues 27–47 (VVWLLVATILSCGWIIYLTYY). Disordered stretches follow at residues 692–718 (RPAQKTSERVVSSPSMSPRPPVDPSEL) and 1205–1314 (KSVG…ASVC). Positions 708–718 (SPRPPVDPSEL) are enriched in pro residues. The span at 1205–1215 (KSVGIEGERKT) shows a compositional bias: basic and acidic residues. The span at 1226 to 1240 (SHSSSSSSEENSSSS) shows a compositional bias: low complexity. The span at 1248–1275 (GEKESPSSAADDHSVQKDLLHSARRDDG) shows a compositional bias: basic and acidic residues. Residues 1278–1303 (SVPTEISGTSPVSPNTQDKSVGQSPL) are compositionally biased toward polar residues. Phosphoserine occurs at positions 1301, 1305, and 1323. Threonine 1325 bears the Phosphothreonine mark. 4 disordered regions span residues 1343–1376 (SDVSRSDENVLDSPKQRRSFGSFPYTPSADSNSF), 1399–1425 (EEFEPISSDEGPGTYPGRKKKKKQMQQ), 1521–1544 (TNKRTSKSSLHRPLDLDTPTSEES), and 1676–1698 (FSENLSPKQDIRGTKTEHPMIGT). A phosphoserine mark is found at serine 1355 and serine 1406. The segment covering 1521–1530 (TNKRTSKSSL) has biased composition (basic residues). Over residues 1684–1693 (QDIRGTKTEH) the composition is skewed to basic and acidic residues. Serine 1805 and serine 1808 each carry phosphoserine. Disordered stretches follow at residues 1927–1991 (RGGV…PLMP), 2165–2192 (PAQPLKPPATVDQEHEEGLGLDNGGGLQ), 2265–2288 (TSGDTATDSPVHVGRAGMPVKESP), 2367–2387 (ESPVTKSGHNSLPTGVAPNLP), 2400–2420 (SSDQNTLDGTHSQHSTSQDDV), and 2598–2677 (TAGS…KDVV). Composition is skewed to polar residues over residues 1931-1948 (LTSNNSSDSPTGSGYNTD) and 1959-1971 (TSPSSDINGNSVS). Polar residues-rich tracts occupy residues 2367 to 2379 (ESPVTKSGHNSLP), 2400 to 2418 (SSDQNTLDGTHSQHSTSQD), and 2598 to 2608 (TAGSASPTPTF). Phosphoserine occurs at positions 2601 and 2603. A compositionally biased stretch (low complexity) spans 2619 to 2638 (SDFSRSSRGSLNGGNRVNNA). Basic and acidic residues predominate over residues 2643–2665 (ANNENNKKESRNKNSLGRSERRT). A Phosphoserine modification is found at serine 2755. Residues 2928-2967 (RQPSTAPQPMKEDIATPLPSEKTPTSVNQTPIETNEFPQL) form a disordered region. Polar residues predominate over residues 2949–2964 (KTPTSVNQTPIETNEF). Residues serine 3562, glutamate 3577, and serine 3653 each carry the phosphoserine modification. Disordered stretches follow at residues 3614 to 3662 (YSRS…TFNI), 3686 to 3744 (SSNS…ERFY), 3821 to 3843 (RRSYDRSSRSLDQDSPSKKKKFQ), 3935 to 3954 (KTNTLLPPQPPPIPSAKGKG), 4089 to 4145 (TTYP…SSSS), and 4325 to 4396 (QSAS…ASQQ). The segment covering 3686–3711 (SSNSEGSCSVFSSPKTTGGFSPSVPF) has biased composition (polar residues). Residues 3727 to 3736 (EDSEKDEKDE) show a composition bias toward acidic residues. Basic and acidic residues predominate over residues 3821-3837 (RRSYDRSSRSLDQDSPS). A compositionally biased stretch (polar residues) spans 4097-4112 (SPGSNAPQTGAKTSAS). The segment covering 4117–4145 (PGSSGLGSPLGRSRHSSSQSDLTGSSSSS) has biased composition (low complexity). Phosphoserine is present on serine 4124. The span at 4325–4358 (QSASFTHMPQSPNVFNEHMTNNTMSPGTAAQSLK) shows a compositional bias: polar residues. Over residues 4359 to 4372 (SPASIRSRSVSDSS) the composition is skewed to low complexity. A compositionally biased stretch (polar residues) spans 4381–4396 (KTSTPVNKSNKAASQQ).

In terms of tissue distribution, highly expressed in testis and ovary. Weakly or not expressed in other tissues.

It localises to the cell membrane. The protein resides in the endoplasmic reticulum membrane. Its subcellular location is the mitochondrion membrane. Its function is as follows. Tube-forming lipid transport protein which provides phosphatidylethanolamine for glycosylphosphatidylinositol (GPI) anchor synthesis in the endoplasmic reticulum. Plays a role in endosomal trafficking and endosome recycling. Also involved in the actin cytoskeleton and cilia structural dynamics. Acts as a regulator of phagocytosis. The protein is Bridge-like lipid transfer protein family member 1 (Bltp1) of Mus musculus (Mouse).